We begin with the raw amino-acid sequence, 367 residues long: Peptide chain release factor 2 (367 aa).

Position 250 is an N5-methylglutamine (Gln-250).

Belongs to the prokaryotic/mitochondrial release factor family. Post-translationally, methylated by PrmC. Methylation increases the termination efficiency of RF2.

The protein resides in the cytoplasm. In terms of biological role, peptide chain release factor 2 directs the termination of translation in response to the peptide chain termination codons UGA and UAA. In Chloroflexus aggregans (strain MD-66 / DSM 9485), this protein is Peptide chain release factor 2.